A 580-amino-acid polypeptide reads, in one-letter code: MALQLLTPSFSFQHSPSPHRLTTLRYTHHTIRCTASAPSYSDLVGRRSANYKPSKWDSNFVETLESDYKKENHEMYIEKLMGDVKHLMKKVVNPIEKMELVDTIQRLGLGYLFNKEIKEVLNTIATSKATFKTKKDLHAVALQFRLLRQHGYEVSPDAFHKFKDEKGGFKESLCMDIKGMLSLYEASHLSFQGEVVLDEAREFTSTHLKAIEGNIDPVLLKKVRHSLEMPLHWRMLRLEARWYIETYDEEDRKNPSLAELAKHDFNSVQTIYQRSLKRMSRWWRDLGLGERLEFSRDRLVECFFWTTGVIFDPQFERCRGVLTKVNQLVSTIDDVYDVYGSLEELELFTDAVDRWDIRAMEQLPEYMKICYLALYNTTNDIAYEALKEEGLDVIPYLKKVWTDLCKSYIVEARWYSNGYKPTLEEYLENAWTSIAGPVALGHAYFSFGQKMPFEALNYSNTSSLIKWSSMIFRLCDDLATSSDEVARGDVPKSIQCYMYEAGVSESVARDHIKYLIDEAWKKMNECLVPSTPFLQPLINAGFNLARMAHCMYEHGDGHGFSNELDKKRVLLLLAEPFKFM.

The N-terminal 26 residues, 1 to 26 (MALQLLTPSFSFQHSPSPHRLTTLRY), are a transit peptide targeting the chloroplast. Residues Arg-296, Asp-333, Asp-337, Arg-473, and Asp-476 each coordinate (2E)-geranyl diphosphate. Mg(2+) is bound by residues Asp-333 and Asp-337. Positions 333–337 (DDVYD) match the DDXXD motif motif. The Mg(2+) site is built by Asp-476, Thr-480, and Glu-484.

It belongs to the terpene synthase family. Tpsb subfamily. In terms of assembly, monomer. It depends on Mg(2+) as a cofactor. Mn(2+) is required as a cofactor. As to expression, mostly expressed in developing and mature fruits, and, to a lower extent, in male leaves. Barely detectable in female leaves and shoots.

It is found in the plastid. Its subcellular location is the chloroplast. The enzyme catalyses (2E)-geranyl diphosphate = alpha-thujene + diphosphate. It carries out the reaction (2E)-geranyl diphosphate = (1R,5R)-sabinene + diphosphate. Its pathway is secondary metabolite biosynthesis; terpenoid biosynthesis. Its function is as follows. Monoterpene synthase (TPS) involved in the biosynthesis of monoterpene natural products used by traditional Chinese medicine to treat headache, inflammation and intoxication. Catalyzes the conversion of (2E)-geranyl diphosphate (GPP) into alpha-thujene and (1R,5R)-sabinene. The chain is Alpha-thujene synthase TPS3, chloroplastic from Litsea cubeba (Aromatic litsea).